Reading from the N-terminus, the 256-residue chain is Thiazole synthase (256 aa).

The active-site Schiff-base intermediate with DXP is Lys-95. 1-deoxy-D-xylulose 5-phosphate-binding positions include Gly-156, 183–184 (AG), and 205–206 (NT).

It belongs to the ThiG family. As to quaternary structure, homotetramer. Forms heterodimers with either ThiH or ThiS.

The protein resides in the cytoplasm. The enzyme catalyses [ThiS sulfur-carrier protein]-C-terminal-Gly-aminoethanethioate + 2-iminoacetate + 1-deoxy-D-xylulose 5-phosphate = [ThiS sulfur-carrier protein]-C-terminal Gly-Gly + 2-[(2R,5Z)-2-carboxy-4-methylthiazol-5(2H)-ylidene]ethyl phosphate + 2 H2O + H(+). The protein operates within cofactor biosynthesis; thiamine diphosphate biosynthesis. Its function is as follows. Catalyzes the rearrangement of 1-deoxy-D-xylulose 5-phosphate (DXP) to produce the thiazole phosphate moiety of thiamine. Sulfur is provided by the thiocarboxylate moiety of the carrier protein ThiS. In vitro, sulfur can be provided by H(2)S. The protein is Thiazole synthase of Gluconacetobacter diazotrophicus (strain ATCC 49037 / DSM 5601 / CCUG 37298 / CIP 103539 / LMG 7603 / PAl5).